The following is a 584-amino-acid chain: Delta 8-(E)-sphingolipid desaturase (584 aa).

Positions 7-82 (KKIFTRSQII…FTRFKIGEIE (76 aa)) constitute a Cytochrome b5 heme-binding domain. Residues His-42 and His-65 each coordinate heme. The interval 109–134 (NKNTSNKKTLDSKLDNDSSNSTSDLE) is disordered. Residues 261–281 (LFLYSLSFLKINQLFLSAVFM) form a helical membrane-spanning segment. Positions 293–297 (HDAGH) match the Histidine box-1 motif. A helical transmembrane segment spans residues 306–326 (IDNIFGMLIADWFGGLSLGWW). The Histidine box-2 signature appears at 330–334 (HNVHH). The next 3 helical transmembrane spans lie at 386–403 (YLYY…YRLS), 423–443 (YFEF…LVFK), and 455–475 (VMVS…SHFA). The Histidine box-3 signature appears at 514–518 (QAIHH).

This sequence belongs to the fatty acid desaturase type 1 family.

The protein resides in the membrane. It catalyses the reaction an N-acylsphing-4-enine + 2 Fe(II)-[cytochrome b5] + O2 + 2 H(+) = a (4E,8E)-4-sphinga-4,8-dienine ceramide + 2 Fe(III)-[cytochrome b5] + 2 H2O. The protein operates within lipid metabolism; sphingolipid metabolism. Its function is as follows. Delta(8)-fatty-acid desaturase which introduces a double bond at the 8-position in the long-chain base (LCB) of ceramides. Required for the formation of the di-unsaturated sphingoid base (E,E)-sphinga-4,8-dienine during glucosylceramide (GluCer) biosynthesis. This chain is Delta 8-(E)-sphingolipid desaturase, found in Candida albicans (strain SC5314 / ATCC MYA-2876) (Yeast).